Reading from the N-terminus, the 232-residue chain is Charged multivesicular body protein 4c (232 aa).

2 disordered regions span residues 1 to 23 (MSKLGKFFKGTRSSRARAAPSAQ) and 177 to 232 (NKKM…AWAT). The interval 1-153 (MSKLGKFFKG…EISEAFSQRV (153 aa)) is intramolecular interaction with C-terminus. Coiled coils occupy residues 21–45 (SAQEALARLRETEEMLAKKQEYLEN) and 125–185 (LNKI…SLEL). Positions 154 to 232 (QFADGFDEAE…DFKQLAAWAT (79 aa)) are intramolecular interaction with N-terminus. A Phosphoserine; by AURKB modification is found at serine 210.

It belongs to the SNF7 family. Probable core component of the endosomal sorting required for transport complex III (ESCRT-III). ESCRT-III components are thought to multimerize to form a flat lattice on the perimeter membrane of the endosome. Several assembly forms of ESCRT-III may exist that interact and act sequentially. Self-associates. Interacts with CHMP2A. Interacts with CHMP4A. Interacts with CHMP4B. Interacts with CHMP6. Interacts with VPS4A. Interacts with PDCD6IP; the interaction is direct. Phosphorylated at Ser-210 by AURKB during cytokinesis: together with ZFYVE19/ANCHR, phosphorylated CHMP4C retains abscission-competent VPS4 (VPS4A and/or VPS4B) at the midbody ring until abscission checkpoint signaling is terminated at late cytokinesis.

It is found in the cytoplasm. The protein localises to the cytosol. It localises to the late endosome membrane. The protein resides in the midbody. Its subcellular location is the midbody ring. Probable core component of the endosomal sorting required for transport complex III (ESCRT-III) which is involved in multivesicular bodies (MVBs) formation and sorting of endosomal cargo proteins into MVBs. MVBs contain intraluminal vesicles (ILVs) that are generated by invagination and scission from the limiting membrane of the endosome and mostly are delivered to lysosomes enabling degradation of membrane proteins, such as stimulated growth factor receptors, lysosomal enzymes and lipids. The MVB pathway appears to require the sequential function of ESCRT-O, -I,-II and -III complexes. ESCRT-III proteins mostly dissociate from the invaginating membrane before the ILV is released. The ESCRT machinery also functions in topologically equivalent membrane fission events, such as the terminal stages of cytokinesis. Key component of the cytokinesis checkpoint, a process required to delay abscission to prevent both premature resolution of intercellular chromosome bridges and accumulation of DNA damage: upon phosphorylation by AURKB, together with ZFYVE19/ANCHR, retains abscission-competent VPS4 (VPS4A and/or VPS4B) at the midbody ring until abscission checkpoint signaling is terminated at late cytokinesis. Deactivation of AURKB results in dephosphorylation of CHMP4C followed by its dissociation from ANCHR and VPS4 and subsequent abscission. ESCRT-III proteins are believed to mediate the necessary vesicle extrusion and/or membrane fission activities, possibly in conjunction with the AAA ATPase VPS4. CHMP4A/B/C are required for the exosomal release of SDCBP, CD63 and syndecan. In Mus musculus (Mouse), this protein is Charged multivesicular body protein 4c (Chmp4c).